Consider the following 780-residue polypeptide: Kojibiose phosphorylase (780 aa).

A substrate-binding site is contributed by 354–355 (WD). The active-site Proton donor is the Glu-496. 608–609 (KQ) is a binding site for substrate.

The protein belongs to the glycosyl hydrolase 65 family.

It carries out the reaction kojibiose + phosphate = beta-D-glucose 1-phosphate + D-glucose. Its function is as follows. Catalyzes the reversible phosphorolysis of kojibiose into beta-D-glucose 1-phosphate (Glc1P) and D-glucose. In the reverse direction, uses Glc1P as acceptor to produce alpha-1,2-glucans up to a degree of polymerization of 6. The polypeptide is Kojibiose phosphorylase (Halothermothrix orenii (strain H 168 / OCM 544 / DSM 9562)).